Reading from the N-terminus, the 270-residue chain is Flavin-dependent thymidylate synthase (270 aa).

A ThyX domain is found at glycine 13–histidine 218. FAD-binding positions include serine 59, arginine 82–arginine 84, and glutamate 90. DUMP contacts are provided by residues glutamine 79–arginine 82, glutamate 90–arginine 94, and arginine 157. Residues arginine 82–serine 92 carry the ThyX motif motif. FAD is bound by residues aspartate 173–histidine 175 and histidine 179. Arginine 184 serves as a coordination point for dUMP. The active-site Involved in ionization of N3 of dUMP, leading to its activation is arginine 184.

This sequence belongs to the thymidylate synthase ThyX family. In terms of assembly, homotetramer. Requires FAD as cofactor.

The enzyme catalyses dUMP + (6R)-5,10-methylene-5,6,7,8-tetrahydrofolate + NADPH + H(+) = dTMP + (6S)-5,6,7,8-tetrahydrofolate + NADP(+). It participates in pyrimidine metabolism; dTTP biosynthesis. Its function is as follows. Catalyzes the reductive methylation of 2'-deoxyuridine-5'-monophosphate (dUMP) to 2'-deoxythymidine-5'-monophosphate (dTMP) while utilizing 5,10-methylenetetrahydrofolate (mTHF) as the methyl donor, and NADPH and FADH(2) as the reductant. This is Flavin-dependent thymidylate synthase from Thermus thermophilus (strain ATCC BAA-163 / DSM 7039 / HB27).